A 208-amino-acid polypeptide reads, in one-letter code: Large ribosomal subunit protein uL4 (208 aa).

Positions 49-78 (KAKGISDISGTTAKPYRQKHTGRARQGSLR) are disordered.

This sequence belongs to the universal ribosomal protein uL4 family. As to quaternary structure, part of the 50S ribosomal subunit.

In terms of biological role, one of the primary rRNA binding proteins, this protein initially binds near the 5'-end of the 23S rRNA. It is important during the early stages of 50S assembly. It makes multiple contacts with different domains of the 23S rRNA in the assembled 50S subunit and ribosome. Its function is as follows. Forms part of the polypeptide exit tunnel. The chain is Large ribosomal subunit protein uL4 from Anaplasma phagocytophilum (strain HZ).